The sequence spans 271 residues: Mannosyl-3-phosphoglycerate phosphatase (271 aa).

Aspartate 13 functions as the Nucleophile in the catalytic mechanism. Positions 13, 15, and 214 each coordinate Mg(2+).

Belongs to the HAD-like hydrolase superfamily. MPGP family. Requires Mg(2+) as cofactor.

Its subcellular location is the cytoplasm. The catalysed reaction is 2-O-(alpha-D-mannosyl)-3-phosphoglycerate + H2O = (2R)-2-O-(alpha-D-mannosyl)-glycerate + phosphate. This is Mannosyl-3-phosphoglycerate phosphatase (yedP) from Escherichia coli O157:H7.